The chain runs to 177 residues: Inner membrane protein p22 (177 aa).

At 1-7 (MFNIKMT) the chain is on the intravirion side. The helical transmembrane segment at 8-28 (ISTLLIALIILVIIILVVFLY) threads the bilayer. At 29–177 (YKKQQPPKKV…IALPRNHKHA (149 aa)) the chain is on the virion surface side.

This sequence belongs to the asfivirus inner membrane protein p22 family.

It localises to the virion membrane. It is found in the host cell membrane. This Ornithodoros (relapsing fever ticks) protein is Inner membrane protein p22.